A 229-amino-acid chain; its full sequence is Probable endo-1,4-beta-xylanase A (229 aa).

The signal sequence occupies residues 1–18 (MVSFKYLFLAASALGALA). 2 N-linked (GlcNAc...) asparagine glycosylation sites follow: Asn-30 and Asn-100. Residues 41 to 229 (AGTPSSTGWN…SSGSSSITVY (189 aa)) form the GH11 domain. Glu-125 serves as the catalytic Nucleophile. The active-site Proton donor is the Glu-216.

Belongs to the glycosyl hydrolase 11 (cellulase G) family.

Its subcellular location is the secreted. It catalyses the reaction Endohydrolysis of (1-&gt;4)-beta-D-xylosidic linkages in xylans.. Its pathway is glycan degradation; xylan degradation. In terms of biological role, endo-1,4-beta-xylanase involved in the hydrolysis of xylan, a major structural heterogeneous polysaccharide found in plant biomass representing the second most abundant polysaccharide in the biosphere, after cellulose. This chain is Probable endo-1,4-beta-xylanase A (xlnA), found in Aspergillus clavatus (strain ATCC 1007 / CBS 513.65 / DSM 816 / NCTC 3887 / NRRL 1 / QM 1276 / 107).